The chain runs to 1659 residues: Fatty acid synthase subunit alpha (1659 aa).

Residues 114–139 (TQAQASGGAGTIAGAGSSTAPVTAPP) form a disordered region. The Carrier domain maps to 160 to 235 (AQAFEIVRTL…AALQKTFTGQ (76 aa)). An O-(pantetheine 4'-phosphoryl)serine modification is found at Ser195. Positions 588–826 (GRSVLITGAG…LCLMFNTMCS (239 aa)) are ketoreductase (KR) domain. A Ketosynthase family 3 (KS3) domain is found at 1030 to 1575 (KQLLHEVLIQ…QKGAQTIVVH (546 aa)). Catalysis depends on for beta-ketoacyl synthase activity residues Cys1217, His1458, and His1499. The segment at 1631-1659 (ETLLDPTPPQTNVDDRVARSIVQQESAEP) is disordered.

It belongs to the thiolase-like superfamily. Fungal fatty acid synthetase subunit alpha family. As to quaternary structure, [Alpha(6)beta(6)] hexamers of two multifunctional subunits (alpha and beta). 4'-phosphopantetheine is transferred from CoA to a specific serine of the acyl carrier domain by the C-terminal PPT domain. This modification is essential for activity because fatty acids are bound in thioester linkage to the sulfhydryl of the prosthetic group.

The enzyme catalyses acetyl-CoA + n malonyl-CoA + 2n NADPH + 4n H(+) = a long-chain-acyl-CoA + n CoA + n CO2 + 2n NADP(+).. The catalysed reaction is a fatty acyl-[ACP] + malonyl-[ACP] + H(+) = a 3-oxoacyl-[ACP] + holo-[ACP] + CO2. It catalyses the reaction a (3R)-hydroxyacyl-[ACP] + NADP(+) = a 3-oxoacyl-[ACP] + NADPH + H(+). It participates in secondary metabolite biosynthesis. In terms of biological role, fatty acid synthase subunit alpha; part of the gene cluster that mediates the biosynthesis of aspercryptins, linear lipopeptides built from six amino acids including 2 highly unusual and nonproteogenic amino acids, 2-amino-octanoic acid (2aoa) and 2-amino-dodecanol (2adol). The core structure of aspercryptins is as follows: Ser/Ala-Thr-Ile/Val-2aoa-Asn-2adol. The first step of aspercryptin biosynthesis is the generation of the fatty acid precursors, octanoic and dodecanoic acids, by the FAS subunits atnF and atnM. The fatty acid precursors are likely transformed into the corresponding alpha-amino fatty acids in three steps. First, they are hydroxylated by the cytochrome P450 monooxygenase atnE, then oxidized to the corresponding alpha-keto acids by the NAD(P)-dependent oxidoreductase atnD, and finally converted to the alpha-amino fatty acids by the PLP-dependent aminotransferases atnH or atnJ. the alpha-amino fatty acids, 2-amino-octanoic and 2-amino-dodecanoic acids, are recognized, activated, and covalently tethered to the NRPS atnA by its fourth and sixth adenylation domains. The second module of atnA is the Thr module and contains an epimerase (E) domain responsible for the epimerization of Thr to D-allo-Thr. Additionally, despite atnA having only one epimerase domain, the first amino acid of aspercryptin A1 is D-Ser, suggesting that serine is either loaded directly as D-Ser on the first module or that the epimerase domain in the threonine module epimerizes both L-Ser and L-Thr. After condensation of the hexapeptide of aspercryptin, the C-terminal reductase (TE) domain might be involved in the reductive release and production of the aldehyde hexapeptide. Further reduction would generate aspercryptins. The variety of aspercryptins produced reflects the flexibility of the atnA NRPS, allowing incorporation of alanine instead of serine, valine for isoleucine, and a C10 fatty amino alcohol instead of the C12 version. AtnB seems to be involved in the selectivity for Ile versus Val by the third module. Moreover, type B, C and D aspercryptins have an additional N-terminal cichorine, acetyl and propionyl group respectively. This is Fatty acid synthase subunit alpha from Emericella nidulans (strain FGSC A4 / ATCC 38163 / CBS 112.46 / NRRL 194 / M139) (Aspergillus nidulans).